A 23-amino-acid chain; its full sequence is Benzaldehyde dehydrogenase [NAD(+)] I (23 aa).

Belongs to the aldehyde dehydrogenase family. As to quaternary structure, homotetramer.

The enzyme catalyses benzaldehyde + NAD(+) + H2O = benzoate + NADH + 2 H(+). This chain is Benzaldehyde dehydrogenase [NAD(+)] I, found in Acinetobacter guillouiae (Acinetobacter genomosp. 11).